Reading from the N-terminus, the 78-residue chain is Small ribosomal subunit protein bS18c (78 aa).

Belongs to the bacterial ribosomal protein bS18 family. In terms of assembly, part of the 30S ribosomal subunit.

Its subcellular location is the plastid. The protein resides in the chloroplast. The protein is Small ribosomal subunit protein bS18c of Oltmannsiellopsis viridis (Marine flagellate).